The sequence spans 393 residues: Short chain dehydrogenase sirQ (393 aa).

Residue L54 participates in NADP(+) binding. S233 functions as the Proton donor in the catalytic mechanism. The active-site Lowers pKa of active site Tyr is K259. Residue A286 coordinates NADP(+).

The protein belongs to the short-chain dehydrogenases/reductases (SDR) family. Highly divergent.

It functions in the pathway mycotoxin biosynthesis. Its function is as follows. Short chain dehydrogenase; part of the gene cluster that mediates the biosynthesis of sirodesmin PL, an epipolythiodioxopiperazine (ETP) characterized by a disulfide bridged cyclic dipeptide and that acts as a phytotoxin which is involved in the blackleg didease of canola. SirD catalyzes the O-prenylation of L-tyrosine (L-Tyr) in the presence of dimethylallyl diphosphate (DMAPP) to yield 4-O-dimethylallyl-L-Tyr, and therefore represents probably the first pathway-specific enzyme in the biosynthesis of sirodesmin PL. 4-O-dimethylallyl-L-Tyr, then undergoes condensation with L-Ser in a reaction catalyzed by the non-ribosomal peptide synthase sirP to form the diketopiperazine (DKP) backbone. Further bishydroxylation of the DKP performed by the cytochrome P450 monooxygenase sirC leads to the production of the intermediate phomamide. This step is essential to form the reactive thiol group required for toxicity of sirodesmin PL. The next steps of sirodesmin biosynthesis are not well understood yet, but some predictions could be made from intermediate compounds identification. Phomamide is converted into phomalizarine via oxidation, probably by sirT. Further oxidation, methylation (by sirM or sirN) and reduction steps convert phomalizarine to deacetyl sirodesmin. Finally, acetyltransferase sirH probably acetylates deacetyl sirodesmin to produce sirodesmin PL. This chain is Short chain dehydrogenase sirQ, found in Leptosphaeria maculans (Blackleg fungus).